Here is a 197-residue protein sequence, read N- to C-terminus: Outer-membrane lipoprotein LolB (197 aa).

A signal peptide spans 1–20; sequence MNRSRRLALFCLGAPLLLQA. A lipid anchor (N-palmitoyl cysteine) is attached at Cys21. Residue Cys21 is the site of S-diacylglycerol cysteine attachment.

This sequence belongs to the LolB family. As to quaternary structure, monomer.

It is found in the cell outer membrane. Plays a critical role in the incorporation of lipoproteins in the outer membrane after they are released by the LolA protein. The protein is Outer-membrane lipoprotein LolB of Cupriavidus necator (strain ATCC 17699 / DSM 428 / KCTC 22496 / NCIMB 10442 / H16 / Stanier 337) (Ralstonia eutropha).